The following is a 46-amino-acid chain: Cysteine-rich venom protein asurin-1 (46 aa).

This sequence belongs to the CRISP family. Contains 8 disulfide bonds. As to expression, expressed by the venom gland.

It localises to the secreted. Functionally, blocks contraction of smooth muscle elicited by high potassium-induced depolarization, but does not block caffeine-stimulated contraction. May target voltage-gated calcium channels on smooth muscle. This is Cysteine-rich venom protein asurin-1 from Austrelaps superbus (Lowland copperhead snake).